The following is a 98-amino-acid chain: Protein translation factor SUI1 homolog (98 aa).

It belongs to the SUI1 family.

The sequence is that of Protein translation factor SUI1 homolog from Thermococcus kodakarensis (strain ATCC BAA-918 / JCM 12380 / KOD1) (Pyrococcus kodakaraensis (strain KOD1)).